The chain runs to 108 residues: Large ribosomal subunit protein uL24 (108 aa).

The protein belongs to the universal ribosomal protein uL24 family. As to quaternary structure, part of the 50S ribosomal subunit.

Its function is as follows. One of two assembly initiator proteins, it binds directly to the 5'-end of the 23S rRNA, where it nucleates assembly of the 50S subunit. In terms of biological role, one of the proteins that surrounds the polypeptide exit tunnel on the outside of the subunit. The polypeptide is Large ribosomal subunit protein uL24 (Citrifermentans bemidjiense (strain ATCC BAA-1014 / DSM 16622 / JCM 12645 / Bem) (Geobacter bemidjiensis)).